A 291-amino-acid polypeptide reads, in one-letter code: 4-diphosphocytidyl-2-C-methyl-D-erythritol kinase (291 aa).

Residue lysine 10 is part of the active site. 94-104 contacts ATP; it reads PVSAGLAGGSS. The active site involves aspartate 136.

This sequence belongs to the GHMP kinase family. IspE subfamily.

It carries out the reaction 4-CDP-2-C-methyl-D-erythritol + ATP = 4-CDP-2-C-methyl-D-erythritol 2-phosphate + ADP + H(+). Its pathway is isoprenoid biosynthesis; isopentenyl diphosphate biosynthesis via DXP pathway; isopentenyl diphosphate from 1-deoxy-D-xylulose 5-phosphate: step 3/6. Catalyzes the phosphorylation of the position 2 hydroxy group of 4-diphosphocytidyl-2C-methyl-D-erythritol. This chain is 4-diphosphocytidyl-2-C-methyl-D-erythritol kinase, found in Listeria innocua serovar 6a (strain ATCC BAA-680 / CLIP 11262).